Consider the following 915-residue polypeptide: Isoleucine--tRNA ligase (915 aa).

A 'HIGH' region motif is present at residues 58 to 68; sequence PYANGHLHIGH. Glu568 provides a ligand contact to L-isoleucyl-5'-AMP. The 'KMSKS' region motif lies at 609-613; that stretch reads KMSKS. Lys612 is a binding site for ATP. Zn(2+) is bound by residues Cys892, Cys895, Cys907, and Cys910.

Belongs to the class-I aminoacyl-tRNA synthetase family. IleS type 1 subfamily. In terms of assembly, monomer. Zn(2+) is required as a cofactor.

The protein localises to the cytoplasm. The enzyme catalyses tRNA(Ile) + L-isoleucine + ATP = L-isoleucyl-tRNA(Ile) + AMP + diphosphate. Functionally, catalyzes the attachment of isoleucine to tRNA(Ile). As IleRS can inadvertently accommodate and process structurally similar amino acids such as valine, to avoid such errors it has two additional distinct tRNA(Ile)-dependent editing activities. One activity is designated as 'pretransfer' editing and involves the hydrolysis of activated Val-AMP. The other activity is designated 'posttransfer' editing and involves deacylation of mischarged Val-tRNA(Ile). The chain is Isoleucine--tRNA ligase from Wolinella succinogenes (strain ATCC 29543 / DSM 1740 / CCUG 13145 / JCM 31913 / LMG 7466 / NCTC 11488 / FDC 602W) (Vibrio succinogenes).